Reading from the N-terminus, the 187-residue chain is MEKKETKNDAEKNNKQDNKSTKSQKKENLNLVNSDKKITELENEISNLKDLYLRKQAEFENFRKRLEKEKDNFVKFANETIMKDVVNFLDNLERAINSSRKSKDFDNLLTGISMIENEILSIFDKKYNLKKFGENGENFDPSRHEAISIEEKEDLKNPEIVEVYQKGYCYNDRILRTAKVKVAQSKN.

The tract at residues 1–31 is disordered; it reads MEKKETKNDAEKNNKQDNKSTKSQKKENLNL.

The protein belongs to the GrpE family. Homodimer.

It is found in the cytoplasm. In terms of biological role, participates actively in the response to hyperosmotic and heat shock by preventing the aggregation of stress-denatured proteins, in association with DnaK and GrpE. It is the nucleotide exchange factor for DnaK and may function as a thermosensor. Unfolded proteins bind initially to DnaJ; upon interaction with the DnaJ-bound protein, DnaK hydrolyzes its bound ATP, resulting in the formation of a stable complex. GrpE releases ADP from DnaK; ATP binding to DnaK triggers the release of the substrate protein, thus completing the reaction cycle. Several rounds of ATP-dependent interactions between DnaJ, DnaK and GrpE are required for fully efficient folding. In Borrelia garinii subsp. bavariensis (strain ATCC BAA-2496 / DSM 23469 / PBi) (Borreliella bavariensis), this protein is Protein GrpE.